A 379-amino-acid polypeptide reads, in one-letter code: Succinyl-diaminopimelate desuccinylase (379 aa).

Residue His-70 participates in Zn(2+) binding. Asp-72 is a catalytic residue. Position 103 (Asp-103) interacts with Zn(2+). Residue Glu-137 is the Proton acceptor of the active site. Zn(2+) contacts are provided by Glu-138, Glu-166, and His-352.

The protein belongs to the peptidase M20A family. DapE subfamily. In terms of assembly, homodimer. Zn(2+) is required as a cofactor. It depends on Co(2+) as a cofactor.

The enzyme catalyses N-succinyl-(2S,6S)-2,6-diaminopimelate + H2O = (2S,6S)-2,6-diaminopimelate + succinate. It functions in the pathway amino-acid biosynthesis; L-lysine biosynthesis via DAP pathway; LL-2,6-diaminopimelate from (S)-tetrahydrodipicolinate (succinylase route): step 3/3. Catalyzes the hydrolysis of N-succinyl-L,L-diaminopimelic acid (SDAP), forming succinate and LL-2,6-diaminopimelate (DAP), an intermediate involved in the bacterial biosynthesis of lysine and meso-diaminopimelic acid, an essential component of bacterial cell walls. In Burkholderia ambifaria (strain MC40-6), this protein is Succinyl-diaminopimelate desuccinylase.